The sequence spans 1621 residues: Nestin (1621 aa).

Residue methionine 1 is modified to N-acetylmethionine. A head region spans residues 1–7 (MEGCMGE). The coil 1A stretch occupies residues 8–43 (ESFQMWELNRRLEAYLARVKALEEQNELLSAELGGL). The IF rod domain occupies 8-313 (ESFQMWELNR…TLLEAENSRL (306 aa)). Residues 44 to 55 (RAQSADTSWRAH) are linker 1. Positions 56-151 (ADDELAALRA…VAHEEERVGL (96 aa)) are coil 1B. Residues 152 to 173 (NAQAACAPRCPAPPRGPPAPAP) form a linker 12 region. The interval 174–192 (EVEELARRLGEAWRGAVRG) is coil 2A. The linker 2 stretch occupies residues 193–195 (YQE). Positions 196–313 (RVAHMETSLG…TLLEAENSRL (118 aa)) are coil 2B. At serine 311 the chain carries Phosphoserine. The tail stretch occupies residues 314–1621 (QTPGGGSKTS…DRESWSSGED (1308 aa)). Threonine 315 is modified (phosphothreonine). Residue serine 325 is modified to Phosphoserine. Threonine 338 is modified (phosphothreonine). Residues serine 355 and serine 358 each carry the phosphoserine modification. Threonine 388 is subject to Phosphothreonine. A phosphoserine mark is found at serine 398, serine 471, serine 476, serine 548, serine 564, serine 578, serine 588, serine 638, serine 680, serine 702, serine 746, and serine 768. The interval 439–490 (SVLPGPEEPGGQRQEASTGQSPEDHASLAPPLSPDHSSLEAKDGESGGSRVF) is disordered. The segment at 670 to 788 (LEKENQEPLR…PPEKVDLEPL (119 aa)) is disordered. Composition is skewed to basic and acidic residues over residues 687 to 725 (EALR…LKTL), 736 to 770 (LETE…RSLG), and 779 to 788 (PPEKVDLEPL). Serine 790 carries the phosphoserine modification. A Glycyl lysine isopeptide (Lys-Gly) (interchain with G-Cter in SUMO1); alternate cross-link involves residue lysine 811. Lysine 811 participates in a covalent cross-link: Glycyl lysine isopeptide (Lys-Gly) (interchain with G-Cter in SUMO2); alternate. A phosphoserine mark is found at serine 820, serine 831, and serine 842. A Phosphothreonine modification is found at threonine 851. Serine 894, serine 905, serine 913, and serine 934 each carry phosphoserine. The segment at 895-1593 (LGAWNLENLR…GSALKTSWAG (699 aa)) is disordered. 4 stretches are compositionally biased toward basic and acidic residues: residues 904–936 (RSPE…RSLE), 949–960 (QRWEDTVEKDQE), 980–994 (LNLR…KEEV), and 1012–1024 (GHPE…EQRG). Serine 1016 carries the phosphoserine modification. A compositionally biased stretch (low complexity) spans 1085–1098 (GSEPAMGESAAGAE). A compositionally biased stretch (gly residues) spans 1099-1110 (PGPGQGVGGLGD). 2 stretches are compositionally biased toward basic and acidic residues: residues 1129 to 1145 (LEAK…KDLE) and 1159 to 1184 (GKSR…RGAE). A phosphoserine mark is found at serine 1261, serine 1282, serine 1286, serine 1310, serine 1347, serine 1409, serine 1418, and serine 1452. Acidic residues predominate over residues 1275–1292 (PQEEGEESREESEEDELG). Over residues 1409–1428 (SDGFADEEESGEEGEEDQEE) the composition is skewed to acidic residues. Composition is skewed to low complexity over residues 1440 to 1453 (GSSV…SSSQ) and 1460 to 1470 (SDSVSVSVPWD). The segment covering 1486-1495 (ETESQDSAEP) has biased composition (polar residues). Serine 1496, serine 1498, serine 1577, serine 1617, and serine 1618 each carry phosphoserine.

This sequence belongs to the intermediate filament family. Forms homodimers and homotetramers in vitro. In mixtures with other intermediate filament proteins such as vimentin and alpha-internexin, tis protein preferentially forms heterodimers which can assemble to form intermediate filaments if nestin does not exceed 25%. Interacts with FHOD3. Constitutively phosphorylated. This increases during mitosis when the cytoplasmic intermediate filament network is reorganized. In terms of tissue distribution, CNS stem cells.

In terms of biological role, required for brain and eye development. Promotes the disassembly of phosphorylated vimentin intermediate filaments (IF) during mitosis and may play a role in the trafficking and distribution of IF proteins and other cellular factors to daughter cells during progenitor cell division. Required for survival, renewal and mitogen-stimulated proliferation of neural progenitor cells. This is Nestin (NES) from Homo sapiens (Human).